The primary structure comprises 148 residues: Hemoglobin subunit beta-A (148 aa).

A Globin domain is found at 3 to 148 (DWTDAERAAI…VVSALGRQYH (146 aa)). Heme b-binding residues include H64 and H93.

This sequence belongs to the globin family. Heterotetramer of two alpha chains and two beta chains. In terms of tissue distribution, red blood cells.

Involved in oxygen transport from gills to the various peripheral tissues. The polypeptide is Hemoglobin subunit beta-A (hbb1) (Seriola quinqueradiata (Five-ray yellowtail)).